Reading from the N-terminus, the 1273-residue chain is Ribulose bisphosphate carboxylase small subunit, chloroplastic (1273 aa).

A chloroplast-targeting transit peptide spans 1 to 134; the sequence is MPFDRQPLLS…AVLPFTSEKD (134 aa). 7 propeptides span residues 269-278, 412-421, 556-565, 699-708, 844-853, 987-996, and 1131-1140; these read GMAAMTGEKD and GMAAMTGEKE.

This sequence belongs to the RuBisCO small chain family. In terms of assembly, heterohexadecamer of 8 large and 8 small subunits. Eight small subunits are processed from a large polyprotein. All start with the same sequence but there is more heterogeneity at the C-terminus.

Its subcellular location is the plastid. It is found in the chloroplast. RuBisCO catalyzes two reactions: the carboxylation of D-ribulose 1,5-bisphosphate, the primary event in carbon dioxide fixation, as well as the oxidative fragmentation of the pentose substrate. Both reactions occur simultaneously and in competition at the same active site. Although the small subunit is not catalytic it is essential for maximal activity. The polypeptide is Ribulose bisphosphate carboxylase small subunit, chloroplastic (Euglena gracilis).